Reading from the N-terminus, the 901-residue chain is Protein translocase subunit SecA (901 aa).

ATP contacts are provided by residues Q87, 105–109 (GEGKT), and D512. Zn(2+)-binding residues include C885, C887, C896, and H897.

This sequence belongs to the SecA family. As to quaternary structure, monomer and homodimer. Part of the essential Sec protein translocation apparatus which comprises SecA, SecYEG and auxiliary proteins SecDF-YajC and YidC. Requires Zn(2+) as cofactor.

It localises to the cell inner membrane. The protein localises to the cytoplasm. The enzyme catalyses ATP + H2O + cellular proteinSide 1 = ADP + phosphate + cellular proteinSide 2.. Its function is as follows. Part of the Sec protein translocase complex. Interacts with the SecYEG preprotein conducting channel. Has a central role in coupling the hydrolysis of ATP to the transfer of proteins into and across the cell membrane, serving both as a receptor for the preprotein-SecB complex and as an ATP-driven molecular motor driving the stepwise translocation of polypeptide chains across the membrane. In Salmonella arizonae (strain ATCC BAA-731 / CDC346-86 / RSK2980), this protein is Protein translocase subunit SecA.